The sequence spans 59 residues: Sec-independent protein translocase protein TatA 1 (59 aa).

A helical membrane pass occupies residues 3-23 (FPLPWQLILILLVILVIFGAS).

The protein belongs to the TatA/E family. As to quaternary structure, forms a complex with TatC.

The protein resides in the cell inner membrane. In terms of biological role, part of the twin-arginine translocation (Tat) system that transports large folded proteins containing a characteristic twin-arginine motif in their signal peptide across membranes. TatA could form the protein-conducting channel of the Tat system. This Aquifex aeolicus (strain VF5) protein is Sec-independent protein translocase protein TatA 1.